Consider the following 266-residue polypeptide: MAYKPQFYPGNTLIAENRRKHMNPEVELKKLRDIPDDEIVKILGHRNPGESYKTVHPPLEEMDFEEDPIKDIVEPIQGAKEGVRVRYIQFADSMYNAPAQPYDRARTYMWRFRGIDTGTLSGRQVIEMRELDLEKISKNFLIDTEFFDPATCGIRGATVHGHSLRLDENGLMFDGLQRYIYDEKTGHVLYVKDQVGRPLDEPVDVGEPLPHDYLAKITTIYRKDNIGMREDKEALEVVQIIHEARTKGGFGLEVFKKDLKKRLGEE.

Arg-123 is a binding site for coenzyme M.

Belongs to the methyl-coenzyme M reductase gamma subunit family. MCR is a hexamer of two alpha, two beta, and two gamma chains, forming a dimer of heterotrimers. Coenzyme F430 serves as cofactor.

The enzyme catalyses coenzyme B + methyl-coenzyme M = methane + coenzyme M-coenzyme B heterodisulfide. It participates in one-carbon metabolism; methyl-coenzyme M reduction; methane from methyl-coenzyme M: step 1/1. In terms of biological role, component of the methyl-coenzyme M reductase (MCR) I that catalyzes the reductive cleavage of methyl-coenzyme M (CoM-S-CH3 or 2-(methylthio)ethanesulfonate) using coenzyme B (CoB or 7-mercaptoheptanoylthreonine phosphate) as reductant which results in the production of methane and the mixed heterodisulfide of CoB and CoM (CoM-S-S-CoB). This is the final step in methanogenesis. The chain is Methyl-coenzyme M reductase II subunit gamma (mrtG) from Methanocaldococcus jannaschii (strain ATCC 43067 / DSM 2661 / JAL-1 / JCM 10045 / NBRC 100440) (Methanococcus jannaschii).